A 473-amino-acid chain; its full sequence is FAD-dependent oxidoreductase dpchF (473 aa).

The signal sequence occupies residues 1 to 21; that stretch reads MKLSFIASPVWALALAQFAAA. 5 N-linked (GlcNAc...) asparagine glycosylation sites follow: Asn-98, Asn-128, Asn-181, Asn-262, and Asn-330.

Belongs to the beta-cyclopiazonate dehydrogenase family. Requires FAD as cofactor.

The protein operates within secondary metabolite biosynthesis; terpenoid biosynthesis. Its function is as follows. FAD-dependent oxidoreductase; part of the gene cluster that mediates the biosynthesis of the diterpenoid pyrones higginsianins A and B. The first step of the pathway is the synthesis of the alpha-pyrone moiety by the polyketide synthase dpchA via condensation of one acetyl-CoA starter unit with 3 malonyl-CoA units and 2 methylations. The alpha-pyrone is then combined with geranylgeranyl pyrophosphate (GGPP) formed by the GGPP synthase dpchD through the action of the prenyltransferase dpchC to yield a linear alpha-pyrone diterpenoid. Subsequent steps in the diterpenoid pyrone biosynthetic pathway involve the decalin core formation, which is initiated by the epoxidation of the C10-C11 olefin by the FAD-dependent oxidoreductase dpchE, and is followed by a cyclization cascade catalyzed by the terpene cyclase dpchB. The short chain dehydrogenase/reductase dpchG then oxidizes the 8S hydroxy group to a ketone and the short chain dehydrogenase/reductase dpchH reduces the ketone to the 8R hydroxy group to yield higginsianin B. Finally, the FAD-dependent oxidoreductase dpchF converts higginsianin B into higginsianin A. In Colletotrichum higginsianum (strain IMI 349063) (Crucifer anthracnose fungus), this protein is FAD-dependent oxidoreductase dpchF.